The following is a 217-amino-acid chain: Probable GTP-binding protein EngB (217 aa).

The EngB-type G domain maps to 29 to 213 (GPPEVAFAGR…RQAIAETVGI (185 aa)). GTP is bound by residues 37–44 (GRSNVGKS), 64–68 (GRTQE), 91–94 (DMPG), 158–161 (TKTD), and 192–194 (TSS). Mg(2+)-binding residues include serine 44 and threonine 66.

Belongs to the TRAFAC class TrmE-Era-EngA-EngB-Septin-like GTPase superfamily. EngB GTPase family. Requires Mg(2+) as cofactor.

Necessary for normal cell division and for the maintenance of normal septation. This chain is Probable GTP-binding protein EngB, found in Rhizobium etli (strain ATCC 51251 / DSM 11541 / JCM 21823 / NBRC 15573 / CFN 42).